The primary structure comprises 236 residues: MLTKKQSELLRFINERMKETGVPPSFDEMKDALDLRSKSGIHRLIIALEERGFIRRLPNRARALEVLRMPGASAADAGRGRKFEPSVIEGHLGRVRPMPAARDDEDGARAMVAIPVMGRIAAGTPISALQTRSHTLNLPPEMLSQGEHYALEVRGDSMIDAGIFDADTVLIRKQDTAETGDIVVALIDDEEATLKRLRRRGASIALEAANPAYETRIFGPDRVRIQGKLVGLIRRY.

Residues 26-46 (FDEMKDALDLRSKSGIHRLII) constitute a DNA-binding region (H-T-H motif). Active-site for autocatalytic cleavage activity residues include S157 and K195.

Belongs to the peptidase S24 family. As to quaternary structure, homodimer.

The enzyme catalyses Hydrolysis of Ala-|-Gly bond in repressor LexA.. In terms of biological role, represses a number of genes involved in the response to DNA damage (SOS response), including recA and lexA. In the presence of single-stranded DNA, RecA interacts with LexA causing an autocatalytic cleavage which disrupts the DNA-binding part of LexA, leading to derepression of the SOS regulon and eventually DNA repair. This chain is LexA repressor, found in Methylocella silvestris (strain DSM 15510 / CIP 108128 / LMG 27833 / NCIMB 13906 / BL2).